The primary structure comprises 145 residues: DNA polymerase epsilon subunit 3 (145 aa).

Ala-2 bears the N-acetylalanine mark. Thr-83 is subject to Phosphothreonine. The stretch at 85–144 (LKEALEAYRREQKGKKEASEQKKKDKDKKDCEEQDKSREEEDEDEERLDEEEQNEEEEVD) forms a coiled coil. A compositionally biased stretch (basic and acidic residues) spans 93–123 (RREQKGKKEASEQKKKDKDKKDCEEQDKSRE). The interval 93 to 145 (RREQKGKKEASEQKKKDKDKKDCEEQDKSREEEDEDEERLDEEEQNEEEEVDN) is disordered. At Ser-121 the chain carries Phosphoserine. A compositionally biased stretch (acidic residues) spans 124 to 145 (EEDEDEERLDEEEQNEEEEVDN).

As to quaternary structure, component of the DNA polymerase epsilon complex consisting of four subunits: the catalytic subunit POLE and the accessory subunits POLE2, POLE3 and POLE4. Interaction with POLE4 is a prerequisite for further binding with POLE and POLE2. Heterodimer with CHRAC1; binds to DNA. Component of the CHRAC ISWI chromatin remodeling complex at least composed of SMARCA5/SNF2H, BAZ1A/ACF1, CHRAC1 and POLE3; the complex preferentially binds DNA through the CHRAC1-POLE3 heterodimer and possesses ATP-dependent nucleosome-remodeling activity. Within the complex, the heterodimer with CHRAC1 interacts with SMARCA5/SNF2H; the interaction is direct and enhances nucleosome sliding activity by the SMARCA5/SNF2H and BAZ1A/ACF1 interaction. Within the complex, the heterodimer with CHRAC1 interacts with BAZ1A/ACF1; the interactions are direct.

Its subcellular location is the nucleus. Functionally, accessory component of the DNA polymerase epsilon complex. Participates in DNA repair and in chromosomal DNA replication. Forms a complex with CHRAC1 and binds naked DNA, which is then incorporated into chromatin, aided by the nucleosome-remodeling activity of ISWI/SNF2H and ACF1. Does not enhance nucleosome sliding activity of the ACF-5 ISWI chromatin remodeling complex. This chain is DNA polymerase epsilon subunit 3 (Pole3), found in Rattus norvegicus (Rat).